The primary structure comprises 270 residues: Hemin import ATP-binding protein HmuV (270 aa).

Positions 2 to 238 (LTVENIEVTL…VTLSQAYGCT (237 aa)) constitute an ABC transporter domain. 34-41 (GHNGSGKT) is an ATP binding site.

Belongs to the ABC transporter superfamily. Heme (hemin) importer (TC 3.A.1.14.5) family. The complex is composed of two ATP-binding proteins (HmuV), two transmembrane proteins (HmuU) and a solute-binding protein (HmuT).

It localises to the cell inner membrane. Functionally, part of the ABC transporter complex HmuTUV involved in hemin import. Responsible for energy coupling to the transport system. This chain is Hemin import ATP-binding protein HmuV, found in Jannaschia sp. (strain CCS1).